A 750-amino-acid chain; its full sequence is Protein O-mannosyl-transferase 2 (750 aa).

The disordered stretch occupies residues 1–23 (MPPATGGGLAESELRPRRGRCGP). Residue Ser41 is modified to Phosphoserine. A helical transmembrane segment spans residues 54–74 (AVGWWALLALVTLLSFATRFH). The N-linked (GlcNAc...) asparagine glycan is linked to Asn98. 5 helical membrane-spanning segments follow: residues 100 to 120 (TFFF…AGYL), 146 to 166 (GFCA…VLDL), 191 to 211 (QYIL…LSMV), 231 to 251 (LTGV…FIIL), and 283 to 303 (VLCL…VHFM). N-linked (GlcNAc...) asparagine glycosylation is present at Asn330. 3 MIR domains span residues 334–390 (PEHL…IKKH), 403–459 (VEFV…IEVV), and 464–521 (GNRI…VEDH). The N-linked (GlcNAc...) asparagine glycan is linked to Asn445. Residues Asn528 and Asn583 are each glycosylated (N-linked (GlcNAc...) asparagine). The next 4 membrane-spanning stretches (helical) occupy residues 596–616 (VVWW…SIIA), 643–663 (VLLG…VLYF), 665–685 (HYFP…DTLL), and 700–720 (GIHV…FYLF).

Belongs to the glycosyltransferase 39 family. Interacts with POMT1. N-glycosylated. In terms of tissue distribution, highly expressed in testis; detected at low levels in most tissues.

The protein localises to the endoplasmic reticulum membrane. The catalysed reaction is a di-trans,poly-cis-dolichyl beta-D-mannosyl phosphate + L-seryl-[protein] = 3-O-(alpha-D-mannosyl)-L-seryl-[protein] + a di-trans,poly-cis-dolichyl phosphate + H(+). The enzyme catalyses a di-trans,poly-cis-dolichyl beta-D-mannosyl phosphate + L-threonyl-[protein] = 3-O-(alpha-D-mannosyl)-L-threonyl-[protein] + a di-trans,poly-cis-dolichyl phosphate + H(+). The protein operates within protein modification; protein glycosylation. Slightly activated by Mg(2+) and inhibited by both Ca(+) and Mn(2+). EDTA ha no effect on activity in vitro. Functionally, transfers mannosyl residues to the hydroxyl group of serine or threonine residues. Coexpression of both POMT1 and POMT2 is necessary for enzyme activity, expression of either POMT1 or POMT2 alone is insufficient. Essentially dedicated to O-mannosylation of alpha-DAG1 and few other proteins but not of cadherins and protocaherins. The polypeptide is Protein O-mannosyl-transferase 2 (POMT2) (Homo sapiens (Human)).